A 100-amino-acid polypeptide reads, in one-letter code: Urease subunit gamma (100 aa).

The protein belongs to the urease gamma subunit family. As to quaternary structure, heterotrimer of UreA (gamma), UreB (beta) and UreC (alpha) subunits. Three heterotrimers associate to form the active enzyme.

The protein resides in the cytoplasm. The catalysed reaction is urea + 2 H2O + H(+) = hydrogencarbonate + 2 NH4(+). Its pathway is nitrogen metabolism; urea degradation; CO(2) and NH(3) from urea (urease route): step 1/1. This Staphylococcus aureus (strain N315) protein is Urease subunit gamma.